The sequence spans 1026 residues: UPF0182 protein FRAAL6027 (1026 aa).

Transmembrane regions (helical) follow at residues 13 to 33 (AKVIVPVLLAVALVIAFVAIF), 60 to 80 (ILLFLIFGAVMAVVIGTNIVL), 108 to 128 (YMKLVLVAVAAVFGLAAGLSA), 167 to 187 (FLLGFLLTAVLLSLLVTVLTH), 208 to 228 (AHISVLLGLLALLKAWAYYLD), 250 to 270 (AVLPAKLILLFISLACAVLFI), and 283 to 303 (LGAGILVLSSVVIGGIYPAFI). Over residues 877-888 (AAAGAGTGATTT) the composition is skewed to low complexity. Disordered regions lie at residues 877-916 (AAAGAGTGATTTTGGGGQATTQGGGTGAAPPGGTSGLQDA) and 958-1026 (LASP…PPPG). Over residues 889–903 (TGGGGQATTQGGGTG) the composition is skewed to gly residues. Positions 970–1001 (PTPSRSAAPTTRGTAAGSAPPGTTPAVAAPAG) are enriched in low complexity. Residues 1016–1026 (PQQPRAAPPPG) show a composition bias toward pro residues.

It belongs to the UPF0182 family.

The protein localises to the cell membrane. The sequence is that of UPF0182 protein FRAAL6027 from Frankia alni (strain DSM 45986 / CECT 9034 / ACN14a).